Consider the following 431-residue polypeptide: Keratin, type I cytoskeletal 18 (431 aa).

The tract at residues 2 to 83 is head; the sequence is SLRTSYSVRS…SGSTGEIMGN (82 aa). The residue at position 12 (Ser-12) is a Phosphoserine. A Phosphothreonine modification is found at Thr-13. Ser-22 and Ser-36 each carry phosphoserine. Positions 84–119 are coil 1A; sequence EKMAMQNLNDRLASYLEKVRILEQANSKLELKIREA. An IF rod domain is found at 84-395; it reads EKMAMQNLND…RLLDGGDFKL (312 aa). The segment at 120 to 136 is linker 1; the sequence is LEKRGPDVHDYSRFQPI. Residues 137–228 form a coil 1B region; the sequence is VDELRKKIFD…KNHDNEVMEL (92 aa). Positions 229–252 are linker 12; it reads RNQISQSGVQVDVDAPKGQDLSQI. Residues 253 to 390 are coil 2; the sequence is MEEIRAKYEK…IATYRRLLDG (138 aa). The interval 391–431 is tail; it reads GDFKLQDALEEQKKVKVMTVTQTLVDGKVVSSSTETKERKL.

This sequence belongs to the intermediate filament family. In terms of assembly, heterotetramer of two type I and two type II keratins. Keratin-18 associates with keratin-8. In terms of processing, proteolytically cleaved by caspases during epithelial cell apoptosis. In terms of tissue distribution, expressed in simple epithelia such as intestinal mucosa, bile duct, hepatocytes, renal tubules, endothelia, ocular lens epithelium, and in a variety of mesenchymally-derived cells such as blood vessel endothelia, pillar gill cells, optic nerve glial cells, fibroblasts, interstitial cells, chondrocytes and ovarian theca cells. Also expressed in epidermis, pharyngeal mucosa, mucosa of anterior esophagus, gill mucosa and cornea.

Functionally, when phosphorylated, plays a role in filament reorganization. The protein is Keratin, type I cytoskeletal 18 of Danio rerio (Zebrafish).